Reading from the N-terminus, the 491-residue chain is Ketol-acid reductoisomerase (NADP(+)) (491 aa).

A KARI N-terminal Rossmann domain is found at 15–208; that stretch reads AQLGKCRFMG…GGHRAGVLES (194 aa). Residues 45–48, Arg-68, Arg-76, Ser-78, and 108–110 contribute to the NADP(+) site; these read CGAQ and DKQ. The active site involves His-132. NADP(+) is bound at residue Gly-158. KARI C-terminal knotted domains follow at residues 209-344 and 345-484; these read SFVA…TAPQ and YEGK…MTDM. Residues Asp-217, Glu-221, Glu-389, and Glu-393 each contribute to the Mg(2+) site. Ser-414 contacts substrate.

This sequence belongs to the ketol-acid reductoisomerase family. Mg(2+) is required as a cofactor.

It catalyses the reaction (2R)-2,3-dihydroxy-3-methylbutanoate + NADP(+) = (2S)-2-acetolactate + NADPH + H(+). It carries out the reaction (2R,3R)-2,3-dihydroxy-3-methylpentanoate + NADP(+) = (S)-2-ethyl-2-hydroxy-3-oxobutanoate + NADPH + H(+). It functions in the pathway amino-acid biosynthesis; L-isoleucine biosynthesis; L-isoleucine from 2-oxobutanoate: step 2/4. It participates in amino-acid biosynthesis; L-valine biosynthesis; L-valine from pyruvate: step 2/4. In terms of biological role, involved in the biosynthesis of branched-chain amino acids (BCAA). Catalyzes an alkyl-migration followed by a ketol-acid reduction of (S)-2-acetolactate (S2AL) to yield (R)-2,3-dihydroxy-isovalerate. In the isomerase reaction, S2AL is rearranged via a Mg-dependent methyl migration to produce 3-hydroxy-3-methyl-2-ketobutyrate (HMKB). In the reductase reaction, this 2-ketoacid undergoes a metal-dependent reduction by NADPH to yield (R)-2,3-dihydroxy-isovalerate. The chain is Ketol-acid reductoisomerase (NADP(+)) from Citrobacter koseri (strain ATCC BAA-895 / CDC 4225-83 / SGSC4696).